The chain runs to 118 residues: Small ribosomal subunit protein uS10 (118 aa).

Position 37 is a phosphoserine (S37).

This sequence belongs to the universal ribosomal protein uS10 family. As to quaternary structure, component of the small ribosomal subunit (SSU). Mature yeast ribosomes consist of a small (40S) and a large (60S) subunit. The 40S small subunit contains 1 molecule of ribosomal RNA (18S rRNA) and at least 33 different proteins. The large 60S subunit contains 3 rRNA molecules (25S, 5.8S and 5S rRNA) and at least 46 different proteins.

The protein resides in the cytoplasm. In terms of biological role, component of the ribosome, a large ribonucleoprotein complex responsible for the synthesis of proteins in the cell. The small ribosomal subunit (SSU) binds messenger RNAs (mRNAs) and translates the encoded message by selecting cognate aminoacyl-transfer RNA (tRNA) molecules. The large subunit (LSU) contains the ribosomal catalytic site termed the peptidyl transferase center (PTC), which catalyzes the formation of peptide bonds, thereby polymerizing the amino acids delivered by tRNAs into a polypeptide chain. The nascent polypeptides leave the ribosome through a tunnel in the LSU and interact with protein factors that function in enzymatic processing, targeting, and the membrane insertion of nascent chains at the exit of the ribosomal tunnel. This is Small ribosomal subunit protein uS10 (rps20) from Schizosaccharomyces pombe (strain 972 / ATCC 24843) (Fission yeast).